Here is a 532-residue protein sequence, read N- to C-terminus: Glucose-6-phosphate isomerase (532 aa).

E330 acts as the Proton donor in catalysis. Residues H359 and K460 contribute to the active site.

The protein belongs to the GPI family.

The protein localises to the cytoplasm. It catalyses the reaction alpha-D-glucose 6-phosphate = beta-D-fructose 6-phosphate. It participates in carbohydrate biosynthesis; gluconeogenesis. The protein operates within carbohydrate degradation; glycolysis; D-glyceraldehyde 3-phosphate and glycerone phosphate from D-glucose: step 2/4. Catalyzes the reversible isomerization of glucose-6-phosphate to fructose-6-phosphate. This is Glucose-6-phosphate isomerase from Prochlorococcus marinus (strain MIT 9211).